Consider the following 444-residue polypeptide: N-succinylarginine dihydrolase (444 aa).

Residues 19–28 (AGLSFGNVAS), asparagine 110, and 137–138 (HR) each bind substrate. The active site involves glutamate 174. Substrate is bound at residue arginine 214. Histidine 250 is a catalytic residue. The substrate site is built by aspartate 252 and asparagine 362. Cysteine 368 acts as the Nucleophile in catalysis.

The protein belongs to the succinylarginine dihydrolase family. In terms of assembly, homodimer.

The enzyme catalyses N(2)-succinyl-L-arginine + 2 H2O + 2 H(+) = N(2)-succinyl-L-ornithine + 2 NH4(+) + CO2. Its pathway is amino-acid degradation; L-arginine degradation via AST pathway; L-glutamate and succinate from L-arginine: step 2/5. Catalyzes the hydrolysis of N(2)-succinylarginine into N(2)-succinylornithine, ammonia and CO(2). This is N-succinylarginine dihydrolase from Shewanella putrefaciens (strain CN-32 / ATCC BAA-453).